Here is a 117-residue protein sequence, read N- to C-terminus: Biofilm growth-associated repressor (117 aa).

The HTH arsR-type domain maps to 20–114 (AMEKRATEVA…ALYAIFCAPE (95 aa)). The segment at residues 54 to 77 (VGELEAKLDIRQPTLSQQLGVLRE) is a DNA-binding region (H-T-H motif).

Its function is as follows. Represses an operon that comprises at least itself and blh. Binds to a palindromic AT-rich sequence spanning the -10 region of the blh promoter and blocks transcription of the operon. In Agrobacterium fabrum (strain C58 / ATCC 33970) (Agrobacterium tumefaciens (strain C58)), this protein is Biofilm growth-associated repressor (bigR).